A 117-amino-acid chain; its full sequence is Immunoglobulin heavy variable 5-51 (117 aa).

The first 19 residues, 1–19 (MGSTAILALLLAVLQGVCA), serve as a signal peptide directing secretion. The interval 20–44 (EVQLVQSGAEVKKPGESLKISCKGS) is framework-1. Positions 20–117 (EVQLVQSGAE…SDTAMYYCAR (98 aa)) constitute an Ig-like domain. A disulfide bridge links cysteine 41 with cysteine 115. Residues 45 to 52 (GYSFTSYW) form a complementarity-determining-1 region. The tract at residues 53–69 (IGWVRQMPGKGLEWMGI) is framework-2. The complementarity-determining-2 stretch occupies residues 70–77 (IYPGDSDT). A framework-3 region spans residues 78-115 (RYSPSFQGQVTISADKSISTAYLQWSSLKASDTAMYYC). Residues 116-117 (AR) form a complementarity-determining-3 region.

In terms of assembly, immunoglobulins are composed of two identical heavy chains and two identical light chains; disulfide-linked.

It is found in the secreted. It localises to the cell membrane. Functionally, v region of the variable domain of immunoglobulin heavy chains that participates in the antigen recognition. Immunoglobulins, also known as antibodies, are membrane-bound or secreted glycoproteins produced by B lymphocytes. In the recognition phase of humoral immunity, the membrane-bound immunoglobulins serve as receptors which, upon binding of a specific antigen, trigger the clonal expansion and differentiation of B lymphocytes into immunoglobulins-secreting plasma cells. Secreted immunoglobulins mediate the effector phase of humoral immunity, which results in the elimination of bound antigens. The antigen binding site is formed by the variable domain of one heavy chain, together with that of its associated light chain. Thus, each immunoglobulin has two antigen binding sites with remarkable affinity for a particular antigen. The variable domains are assembled by a process called V-(D)-J rearrangement and can then be subjected to somatic hypermutations which, after exposure to antigen and selection, allow affinity maturation for a particular antigen. The polypeptide is Immunoglobulin heavy variable 5-51 (Homo sapiens (Human)).